The following is a 331-amino-acid chain: Ketol-acid reductoisomerase (NADP(+)) (331 aa).

The 181-residue stretch at 2–182 (ARMYYDTDAN…GGTRAGILET (181 aa)) folds into the KARI N-terminal Rossmann domain. NADP(+) contacts are provided by residues 25-28 (YGSQ), Ser51, Ser53, and 83-86 (DEVQ). The active site involves His108. Gly134 is a binding site for NADP(+). The KARI C-terminal knotted domain maps to 183-328 (TFREETETDL…KDLRAMFSWL (146 aa)). Residues Asp191, Glu195, Glu227, and Glu231 each contribute to the Mg(2+) site. Substrate is bound at residue Ser252.

Belongs to the ketol-acid reductoisomerase family. The cofactor is Mg(2+).

The catalysed reaction is (2R)-2,3-dihydroxy-3-methylbutanoate + NADP(+) = (2S)-2-acetolactate + NADPH + H(+). The enzyme catalyses (2R,3R)-2,3-dihydroxy-3-methylpentanoate + NADP(+) = (S)-2-ethyl-2-hydroxy-3-oxobutanoate + NADPH + H(+). The protein operates within amino-acid biosynthesis; L-isoleucine biosynthesis; L-isoleucine from 2-oxobutanoate: step 2/4. It functions in the pathway amino-acid biosynthesis; L-valine biosynthesis; L-valine from pyruvate: step 2/4. Involved in the biosynthesis of branched-chain amino acids (BCAA). Catalyzes an alkyl-migration followed by a ketol-acid reduction of (S)-2-acetolactate (S2AL) to yield (R)-2,3-dihydroxy-isovalerate. In the isomerase reaction, S2AL is rearranged via a Mg-dependent methyl migration to produce 3-hydroxy-3-methyl-2-ketobutyrate (HMKB). In the reductase reaction, this 2-ketoacid undergoes a metal-dependent reduction by NADPH to yield (R)-2,3-dihydroxy-isovalerate. The sequence is that of Ketol-acid reductoisomerase (NADP(+)) from Rippkaea orientalis (strain PCC 8801 / RF-1) (Cyanothece sp. (strain PCC 8801)).